We begin with the raw amino-acid sequence, 369 residues long: uncharacterized protein (369 aa).

Residues 1 to 19 (MKKLIAVAVLSACGSLAHA) form the signal peptide.

This is an uncharacterized protein from Haemophilus influenzae (strain ATCC 51907 / DSM 11121 / KW20 / Rd).